Reading from the N-terminus, the 199-residue chain is Small ribosomal subunit protein uS5 (199 aa).

A disordered region spans residues 1–28 (MARTPNTDRRQRGGDDQRNRSPRSDERD). Residues 31–94 (FLDKLVHINR…DQAKRTMIKV (64 aa)) enclose the S5 DRBM domain.

It belongs to the universal ribosomal protein uS5 family. Part of the 30S ribosomal subunit. Contacts proteins S4 and S8.

Functionally, with S4 and S12 plays an important role in translational accuracy. In terms of biological role, located at the back of the 30S subunit body where it stabilizes the conformation of the head with respect to the body. In Rhodospirillum rubrum (strain ATCC 11170 / ATH 1.1.1 / DSM 467 / LMG 4362 / NCIMB 8255 / S1), this protein is Small ribosomal subunit protein uS5.